The chain runs to 198 residues: Large ribosomal subunit protein uL5 (198 aa).

This sequence belongs to the universal ribosomal protein uL5 family. In terms of assembly, part of the 50S ribosomal subunit; part of the 5S rRNA/L5/L18/L25 subcomplex. Contacts the 5S rRNA and the P site tRNA. Forms a bridge to the 30S subunit in the 70S ribosome.

In terms of biological role, this is one of the proteins that bind and probably mediate the attachment of the 5S RNA into the large ribosomal subunit, where it forms part of the central protuberance. In the 70S ribosome it contacts protein S13 of the 30S subunit (bridge B1b), connecting the 2 subunits; this bridge is implicated in subunit movement. Contacts the P site tRNA; the 5S rRNA and some of its associated proteins might help stabilize positioning of ribosome-bound tRNAs. The sequence is that of Large ribosomal subunit protein uL5 from Chlorobium phaeovibrioides (strain DSM 265 / 1930) (Prosthecochloris vibrioformis (strain DSM 265)).